Here is a 37-residue protein sequence, read N- to C-terminus: Esculentin-2A (37 aa).

Cysteines 31 and 37 form a disulfide.

This sequence belongs to the frog skin active peptide (FSAP) family. Esculentin subfamily. In terms of tissue distribution, expressed by the skin glands.

The protein localises to the secreted. Shows antibacterial activity against representative Gram-negative and Gram-positive bacterial species, and hemolytic activity. The chain is Esculentin-2A from Pelophylax lessonae (Pool frog).